The primary structure comprises 432 residues: MTRTVKRDENAYARLGWLLVLFGFGGALLWAAFAPLDQGVAVPATVIISGQRKSVQHPLGGVVKHILVRDGQHVEAGEPLIRMEPTQARANVDSLLNRYANARLNQARLQAEYDGRRTLEMPAGLAEQAPLPTLGERLELQRQLLHSRQTALANELSALRANIEGLRAQLEGLRQTEGNQRLQQRLLNSQLSGARDLAEEGYMPRNQLLEQERQLAEVNARLSESSGRFGQIRQSIAEAQMRIAQREEEYRKEVNGQLAETQVNARTLWEELSSARYELRHAEIRAPVSGYVAGLKVFTDGGVIGPGELLMYIVPNSDSLEVEGQLAVNLVDRIHSGLPVEMLFTAFNQSKTPRVTGEVTMVSADRLLDEQNKQPYYALRAQVDAAAMGKLKGLQIRPGMAVQVFVRTGERSLLNYLFKPLFDRAHVALAEN.

Topologically, residues methionine 1–arginine 14 are cytoplasmic. A helical membrane pass occupies residues leucine 15–leucine 36. The Periplasmic portion of the chain corresponds to aspartate 37 to asparagine 432.

Belongs to the membrane fusion protein (MFP) (TC 8.A.1) family.

The protein resides in the cell inner membrane. In terms of biological role, involved in the secretion of alkaline protease. The protein is Alkaline protease secretion protein AprE (aprE) of Pseudomonas aeruginosa (strain ATCC 15692 / DSM 22644 / CIP 104116 / JCM 14847 / LMG 12228 / 1C / PRS 101 / PAO1).